The primary structure comprises 207 residues: Ribosomal RNA large subunit methyltransferase E (207 aa).

Residues G60, W62, D80, D96, and D121 each coordinate S-adenosyl-L-methionine. K161 serves as the catalytic Proton acceptor.

Belongs to the class I-like SAM-binding methyltransferase superfamily. RNA methyltransferase RlmE family.

The protein resides in the cytoplasm. It carries out the reaction uridine(2552) in 23S rRNA + S-adenosyl-L-methionine = 2'-O-methyluridine(2552) in 23S rRNA + S-adenosyl-L-homocysteine + H(+). In terms of biological role, specifically methylates the uridine in position 2552 of 23S rRNA at the 2'-O position of the ribose in the fully assembled 50S ribosomal subunit. In Ectopseudomonas mendocina (strain ymp) (Pseudomonas mendocina), this protein is Ribosomal RNA large subunit methyltransferase E.